The primary structure comprises 122 residues: Protein FLORAL ORGAN NUMBER2 (122 aa).

A signal peptide spans 1–25 (MGRLFLCLVVAWCWVALLLVAPVHG). Residues 28–122 (GLPGEFSGDQ…PEHARSTGRP (95 aa)) form a disordered region. Basic residues predominate over residues 54 to 63 (KQPRGVKGTR). Over residues 64 to 77 (RPSWSSWSSTASRS) the composition is skewed to low complexity. Over residues 111–122 (RRPEHARSTGRP) the composition is skewed to basic and acidic residues.

Belongs to the CLV3/ESR signal peptide family.

Its subcellular location is the secreted. In terms of biological role, probable extracellular signal that regulates meristem maintenance. May function as a putative ligand for a receptor complex including FON1. Regulates the size of the floral meristem and the number of floral organs. This chain is Protein FLORAL ORGAN NUMBER2 (FON2), found in Oryza sativa subsp. indica (Rice).